A 424-amino-acid polypeptide reads, in one-letter code: MSILNNKEVIVIIDAWSGGKHLIPAFQALGYFCLHVQSTFLPEVFIADNQLAIARSDRHIVHDGNIETLLSQLQPYTIKAILAGSEGAVGLADCLNDALELTFSNQFELSAARRNKYLMQEQLALKGVASINQQLAGHSDELKQWLAGHAHWPVVLKPIQSAGTDGVFICHDLAQALQAFEAILAKKDFFGSPNREVLCQEFLAGEEFVVNGIACQGEYFFTELWQSKKQQRNGFPVYETQYLHYQNDAGFDVLTAYTVQVCQTLGINNGAFHAEVMMTSGGPVLIEIGARVAGGADPYIIEECLGHSQISKLAQAVLHPAKFLQECRRQHDFSGHRRAAYVYMISPSPGRVQVSPEEKFIKIDGVISINYHYAPGDIQQETCDLLSSPGVIIAIRDNPALLKQTIAEIRDVEADFYHLGLIDE.

The ATP-grasp domain maps to 120–318 (QEQLALKGVA…QISKLAQAVL (199 aa)). 147–209 (AGHAHWPVVL…QEFLAGEEFV (63 aa)) contributes to the ATP binding site. Glutamate 275 and glutamate 287 together coordinate Mg(2+).

It depends on Mg(2+) as a cofactor. The cofactor is Mn(2+).

It carries out the reaction 3-[[[(2R,3R)-3-carboxyoxiran-2-yl]carbonyl]amino]-L-alanine + L-valine + ATP = dapdiamide E + ADP + phosphate + H(+). It catalyses the reaction N(3)-fumaramoyl-(S)-2,3-diaminopropanoate + L-valine + ATP = dapdiamide A + ADP + phosphate + H(+). The enzyme catalyses N(3)-fumaramoyl-(S)-2,3-diaminopropanoate + L-isoleucine + ATP = dapdiamide B + ADP + phosphate + H(+). The catalysed reaction is N(3)-fumaramoyl-(S)-2,3-diaminopropanoate + L-leucine + ATP = dapdiamide C + ADP + phosphate + H(+). It functions in the pathway antibiotic biosynthesis. Functionally, involved in dapdiamide antibiotics biosynthesis. Ligates N-beta-fumaramoyl-DAP and valine, isoleucine or leucine to form dapdiamides A, B or C, respectively. Also ligates N-beta-epoxysuccinamoyl-DAP and valine to form dapdiamide E. The protein is Dapdiamide A synthase of Enterobacter agglomerans (Erwinia herbicola).